Reading from the N-terminus, the 329-residue chain is Probable allantoicase (329 aa).

This sequence belongs to the allantoicase family.

The catalysed reaction is allantoate + H2O = (S)-ureidoglycolate + urea. The protein operates within nitrogen metabolism; (S)-allantoin degradation; (S)-ureidoglycolate from allantoate (aminidohydrolase route): step 1/1. The polypeptide is Probable allantoicase (Nocardia farcinica (strain IFM 10152)).